A 153-amino-acid chain; its full sequence is Small ribosomal subunit protein bS16 (153 aa).

The tract at residues 130-153 is disordered; it reads EAEAAAAAEEAPAEEAAEEAPAEA. Positions 140–153 are enriched in acidic residues; sequence APAEEAAEEAPAEA.

The protein belongs to the bacterial ribosomal protein bS16 family.

In Bifidobacterium longum subsp. infantis (strain ATCC 15697 / DSM 20088 / JCM 1222 / NCTC 11817 / S12), this protein is Small ribosomal subunit protein bS16.